The following is a 159-amino-acid chain: Growth arrest and DNA damage-inducible protein GADD45 gamma (159 aa).

The tract at residues 43 to 86 (VYESAKVLNVDPDNVTFCVLAAGEEDEGDIALQIHFTLIQAFCC) is homodimerization.

It belongs to the GADD45 family. Undergoes concentration-dependent homodimerization, which is required for growth inhibititory activity and enhances interaction with PCNA. Interacts with GADD45GIP1. Interacts with PCNA.

Functionally, involved in the regulation of growth and apoptosis. Mediates activation of stress-responsive MTK1/MEKK4 MAPKKK. This is Growth arrest and DNA damage-inducible protein GADD45 gamma (GADD45G) from Homo sapiens (Human).